A 350-amino-acid chain; its full sequence is MRPIKLMGHERSLTQVKYNREGDLLFSVAKDNAASIWYSSNGERLGTLEGHQGVIWSIDVDPDTHLCATGGGDLAIKLWKVETGKCVFTWESPSPVRRVAFSPDGSRLLAIADQVMGHIGTIVVYEINHDDESLTNQSTEPSLVIETPQDGAKATVAGWSANGEFIISGHDDGYIYKYDAQTGEAVNSLEAHGIHTEEKNVTVTDIQFAAEDRSYFITSSKDKCSTLIDVDTFEILKVYKADAPMNTAAITPLKDFVILGGGQEARNVTTTAESQGKFEARFYHKVFEDEIGRVKGHFGPLNTVAVHPDGTGYSSGGEDGFIRVHTFDKSYFDFYVDAAEKNTEKSAEKA.

WD repeat units follow at residues 8 to 49 (GHER…GTLE), 51 to 89 (HQGV…CVFT), 91 to 135 (ESPS…ESLT), 149 to 188 (QDGA…AVNS), 198 to 240 (EKNV…KVYK), and 296 to 335 (GHFG…FDFY).

Belongs to the eIF-3 subunit I family. Component of the eukaryotic translation initiation factor 3 (eIF-3) complex.

The protein localises to the cytoplasm. In terms of biological role, component of the eukaryotic translation initiation factor 3 (eIF-3) complex, which is involved in protein synthesis of a specialized repertoire of mRNAs and, together with other initiation factors, stimulates binding of mRNA and methionyl-tRNAi to the 40S ribosome. The eIF-3 complex specifically targets and initiates translation of a subset of mRNAs involved in cell proliferation. The polypeptide is Eukaryotic translation initiation factor 3 subunit I (Scheffersomyces stipitis (strain ATCC 58785 / CBS 6054 / NBRC 10063 / NRRL Y-11545) (Yeast)).